A 278-amino-acid polypeptide reads, in one-letter code: Tryptophan synthase alpha chain (278 aa).

Catalysis depends on proton acceptor residues glutamate 50 and aspartate 61.

It belongs to the TrpA family. In terms of assembly, tetramer of two alpha and two beta chains.

The catalysed reaction is (1S,2R)-1-C-(indol-3-yl)glycerol 3-phosphate + L-serine = D-glyceraldehyde 3-phosphate + L-tryptophan + H2O. Its pathway is amino-acid biosynthesis; L-tryptophan biosynthesis; L-tryptophan from chorismate: step 5/5. The alpha subunit is responsible for the aldol cleavage of indoleglycerol phosphate to indole and glyceraldehyde 3-phosphate. In Rhodopseudomonas palustris (strain ATCC BAA-98 / CGA009), this protein is Tryptophan synthase alpha chain.